A 144-amino-acid polypeptide reads, in one-letter code: MTEQKQVKKPSARRRARECTVQALYSWAVSGNTAEQVELAFVLDQDMDGVDKPYFRKLFRQTIENIETVDFSISPYIDRAFDELDPIETAILRLAVYELRFELDVPYKVVINEAIEVAKVFGADESHKYINGVLDKIAPALGRK.

The protein belongs to the NusB family.

Its function is as follows. Involved in transcription antitermination. Required for transcription of ribosomal RNA (rRNA) genes. Binds specifically to the boxA antiterminator sequence of the ribosomal RNA (rrn) operons. The protein is Transcription antitermination protein NusB of Haemophilus influenzae (strain PittGG).